Here is a 43-residue protein sequence, read N- to C-terminus: SPbeta prophage-derived uncharacterized protein YopG (43 aa).

The protein is SPbeta prophage-derived uncharacterized protein YopG (yopG) of Bacillus subtilis (strain 168).